Here is a 928-residue protein sequence, read N- to C-terminus: Interphotoreceptor matrix proteoglycan 1 (928 aa).

Positions 1-20 (MHLKTGLIFLAICLALQVQG) are cleaved as a signal peptide. The disordered stretch occupies residues 26–50 (SKTNHGEAKQLADASGSDKTERTTK). The span at 29–49 (NHGEAKQLADASGSDKTERTT) shows a compositional bias: basic and acidic residues. The N-linked (GlcNAc...) asparagine glycan is linked to Asn143. Residues 164-182 (QERKDEISTDKTGGKKLED) are compositionally biased toward basic and acidic residues. Residues 164–191 (QERKDEISTDKTGGKKLEDIPSVSTGPP) are disordered. 2 N-linked (GlcNAc...) asparagine glycosylation sites follow: Asn203 and Asn212. Residues 231 to 356 (AEQMVEFSVT…TKLTVTDLQQ (126 aa)) form the SEA 1 domain. 2 disordered regions span residues 441-481 (LSRE…TEDI) and 494-522 (ALVSTDSPAKPEDSYLPPPADESDSNDLI). Residues 466-477 (PSREPPHDRSPD) are compositionally biased toward basic and acidic residues. In terms of domain architecture, SEA 2 spans 735 to 848 (KELVVFFSLR…YSLDIEPADQ (114 aa)). Residues Asn756 and Asn780 are each glycosylated (N-linked (GlcNAc...) asparagine). Positions 785–793 (KQLEILNFR) match the Heparin- and hyaluronan-binding motif. Asn794 and Asn812 each carry an N-linked (GlcNAc...) asparagine glycan.

Post-translationally, highly glycosylated (N- and O-linked carbohydrates and sialic acid). Abundantly expressed in the retina (at protein level). Localizes to the photoreceptor layer of the interphotoreceptor matrix of the retina (at protein level).

It is found in the cell projection. Its subcellular location is the cilium. It localises to the photoreceptor outer segment. The protein resides in the secreted. The protein localises to the extracellular space. It is found in the extracellular matrix. Its subcellular location is the interphotoreceptor matrix. It localises to the photoreceptor inner segment. Its function is as follows. Chondroitin sulfate-, heparin- and hyaluronan-binding protein. May serve to form a basic macromolecular scaffold comprising the insoluble interphotoreceptor matrix. This Gallus gallus (Chicken) protein is Interphotoreceptor matrix proteoglycan 1.